Reading from the N-terminus, the 551-residue chain is MSSEQQNEADSKPAVIPQCFKIENQYETFSRLSETSTPGVVPSVSTLWRLLFELQKMIECEPSCVEYFRQRKEELESHVDSEIETSKDESSVNKVEEKVEEFKEDNVEQEIKQKRSLSESPQESMLEKVSKKPKVSEAHNEEISPENVETIENELDLPVKGKDEQTTGLVYKNANDLLTGSLLSFIVDDSFSYEQKKKLLCVDSFPTSDVRSLVAGTPATDDFSHNKPNNQISISTFYSSLDPYFRAFNDDDIAFLKKGFDVSSSYNIPPLGERYYDLTPEDEMTNLCANSIYQNLQTSAQGSLEAFNEADTVSEEVRCGPLTERLMASLIPCYTQNDEEQKPSIAVGEFAETDSGSEKSKIGTSIDGIESGNNEYTEQPDIQESSLSICEDRLRYTLKQLGILYDGDVDWSKRQDDEISATLRSLNARLKVVSDENEKMRNALLQMLPEEMAFQEFQNVMDDLDKQIEQAYVKRNRSLKVKKKRIVTDKIGSSATSGSFPVIKSLMDKRSMWLEKLQPLFQDKLTQHLGSPTSIFNDLSDHTTSNYSTSV.

Residues 106–117 are compositionally biased toward basic and acidic residues; the sequence is NVEQEIKQKRSL. Disordered regions lie at residues 106 to 144 and 351 to 383; these read NVEQ…EEIS and AETD…PDIQ. Position 120 is a phosphoserine (S120). The segment covering 125-142 has biased composition (basic and acidic residues); that stretch reads MLEKVSKKPKVSEAHNEE. S144 bears the Phosphoserine mark. A compositionally biased stretch (polar residues) spans 371-383; the sequence is SGNNEYTEQPDIQ. Residues 417–476 adopt a coiled-coil conformation; it reads DEISATLRSLNARLKVVSDENEKMRNALLQMLPEEMAFQEFQNVMDDLDKQIEQAYVKRN.

It belongs to the NGG1 family. Component of the 1.8 MDa SAGA (Spt-Ada-Gcn5 acetyltransferase) complex, which is composed of 19 subunits tra1, spt7, taf5, ngg1/ada3, sgf73, spt20, spt8, taf12, taf6, hfi1/ada1, ubp8, gcn5, ada2, spt3, sgf29, taf10, taf9, sgf11 and sus1. The SAGA complex is composed of 4 modules, namely the HAT (histone acetyltransferase) module (gcn5, ada2, ngg1/ada3 and sgf29), the DUB (deubiquitinating) module (ubp8, sgf11, sgf73 and sus1), the core or TAF (TBP-associated factor) module (taf5, taf6, taf9, taf10 and taf12), and the Tra1 or SPT (Suppressor of Ty) module (tra1, hfi1/ada1, spt3, spt7, spt8 and spt20). The Tra1/SPT module binds activators, the core module recruits TBP (TATA-binding protein), the HAT module contains the histone H3 acetyltransferase gcn5, and the DUB module comprises the histone H2B deubiquitinase ubp8.

It is found in the nucleus. Its function is as follows. Component of the transcription coactivator SAGA complex. SAGA acts as a general cofactor required for essentially all RNA polymerase II transcription. At the promoters, SAGA is required for transcription pre-initiation complex (PIC) recruitment. It influences RNA polymerase II transcriptional activity through different activities such as TBP interaction (via core/TAF module) and promoter selectivity, interaction with transcription activators (via Tra1/SPT module), and chromatin modification through histone acetylation (via HAT module) and deubiquitination (via DUB module). SAGA preferentially acetylates histones H3 (to form H3K9ac, H3K14ac, H3K18ac and H3K23ac) and H2B and deubiquitinates histone H2B. SAGA interacts with DNA via upstream activating sequences (UASs). As part of the HAT module, involved in negative regulation of sexual differentiation in nutrient-rich conditions. The protein is SAGA complex subunit Ngg1 (ngg1) of Schizosaccharomyces pombe (strain 972 / ATCC 24843) (Fission yeast).